Reading from the N-terminus, the 630-residue chain is Transferrin-binding protein B (630 aa).

Positions 1 to 17 (MKSVPLITGGLSFLLSA) are cleaved as a signal peptide. The N-palmitoyl cysteine moiety is linked to residue C18. The S-diacylglycerol cysteine moiety is linked to residue C18. Disordered regions lie at residues 26–53 (DVDD…KSNL), 280–301 (VTPT…LEGG), and 591–613 (NNPT…SPNA). Over residues 32–50 (NPSSSKPRYQDDTSSSRTK) the composition is skewed to polar residues.

This sequence belongs to the TbpB family.

It localises to the cell outer membrane. The protein localises to the cell surface. Functionally, haemophilus acquires iron by extracting it from serum transferrin (TF) in its human host. Acts as a transferrin receptor and is required for transferrin utilization. The protein is Transferrin-binding protein B of Haemophilus influenzae (strain 86-028NP).